Reading from the N-terminus, the 144-residue chain is Large ribosomal subunit protein uL16 (144 aa).

Belongs to the universal ribosomal protein uL16 family. In terms of assembly, part of the 50S ribosomal subunit.

Binds 23S rRNA and is also seen to make contacts with the A and possibly P site tRNAs. The sequence is that of Large ribosomal subunit protein uL16 from Thermoanaerobacter sp. (strain X514).